The primary structure comprises 247 residues: ATP synthase subunit a, chloroplastic (247 aa).

Transmembrane regions (helical) follow at residues 38 to 58 (QVLITSWVVIAILLGSASIAV), 95 to 115 (VPFIGTMFLFIFVSNWSGALL), 134 to 154 (INTTVALALLTSVAYFYAGLT), 199 to 219 (LVVVVLVSLVPLVVPIPVMFL), and 220 to 240 (GLFTSGIQALIFATLAAAYIG).

It belongs to the ATPase A chain family. In terms of assembly, F-type ATPases have 2 components, CF(1) - the catalytic core - and CF(0) - the membrane proton channel. CF(1) has five subunits: alpha(3), beta(3), gamma(1), delta(1), epsilon(1). CF(0) has four main subunits: a, b, b' and c.

It is found in the plastid. The protein localises to the chloroplast thylakoid membrane. Its function is as follows. Key component of the proton channel; it plays a direct role in the translocation of protons across the membrane. This Eucalyptus globulus subsp. globulus (Tasmanian blue gum) protein is ATP synthase subunit a, chloroplastic.